The chain runs to 463 residues: Chitobiosyldiphosphodolichol beta-mannosyltransferase (463 aa).

Residues M1–A3 are Lumenal-facing. The helical transmembrane segment at W4–L24 threads the bilayer. At T25–P105 the chain is on the cytoplasmic side. An intramembrane region (helical) is located at residues F106–Y126. The Lumenal segment spans residues K127–H463.

Belongs to the glycosyltransferase group 1 family.

The protein localises to the endoplasmic reticulum membrane. It catalyses the reaction an N,N'-diacetylchitobiosyl-diphospho-di-trans,poly-cis-dolichol + GDP-alpha-D-mannose = a beta-D-Man-(1-&gt;4)-beta-D-GlcNAc-(1-&gt;4)-alpha-D-GlcNAc-diphospho-di-trans,poly-cis-dolichol + GDP + H(+). It participates in protein modification; protein glycosylation. Functionally, participates in the formation of the lipid-linked precursor oligosaccharide for N-glycosylation. Involved in assembling the dolichol-pyrophosphate-GlcNAc(2)-Man(5) intermediate on the cytoplasmic surface of the ER. This chain is Chitobiosyldiphosphodolichol beta-mannosyltransferase (ALG1), found in Yarrowia lipolytica (strain CLIB 122 / E 150) (Yeast).